Consider the following 475-residue polypeptide: GTPase Der (475 aa).

2 consecutive EngA-type G domains span residues 2–166 (LRIA…NIPE) and 213–386 (LKIA…ETVS). Residues 8–15 (GRPNVGKS), 55–59 (DTGGV), 118–121 (NKAD), 219–226 (GRPNVGKS), 266–270 (DTAGL), and 331–334 (NKWD) contribute to the GTP site. Residues 387–471 (RKVPTPVVNK…PFDLEIKEKA (85 aa)) enclose the KH-like domain.

This sequence belongs to the TRAFAC class TrmE-Era-EngA-EngB-Septin-like GTPase superfamily. EngA (Der) GTPase family. As to quaternary structure, associates with the 50S ribosomal subunit.

In terms of biological role, GTPase that plays an essential role in the late steps of ribosome biogenesis. This chain is GTPase Der, found in Chlamydia felis (strain Fe/C-56) (Chlamydophila felis).